Reading from the N-terminus, the 366-residue chain is Growth hormone secretagogue receptor type 1 (366 aa).

At 1–40 (MWNATPSEEPGSNLTRAELGWDAPPGNDSLADELLQLFPA) the chain is on the extracellular side. N-linked (GlcNAc...) asparagine glycans are attached at residues Asn-13 and Asn-27. Residues 41 to 66 (PLLAGVTATCVALFVVGIAGNLLTML) form a helical membrane-spanning segment. Over 67–72 (VVSRFR) the chain is Cytoplasmic. Residues 73 to 96 (ELRTTTNLYLSSMAFSDLLIFLCM) traverse the membrane as a helical segment. Residues 97-117 (PLDLVRLWQYRPWNFGDLLCK) are Extracellular-facing. Residues Cys-116 and Cys-198 are joined by a disulfide bond. A helical membrane pass occupies residues 118 to 139 (LFQFVSESCTYATVLTITALSV). Over 140–162 (ERYFAICFPLRAKVVVTKGRVKL) the chain is Cytoplasmic. A helical membrane pass occupies residues 163–183 (VILVIWALAFCSAGPIFVLVG). The Extracellular portion of the chain corresponds to 184-211 (VEHENGTDPQDTNECRATEFAVRSGLLT). The N-linked (GlcNAc...) asparagine glycan is linked to Asn-188. Residues 212–235 (IMVWVSSVFFFLPVFCLTVLYSLI) form a helical membrane-spanning segment. Residues 236-263 (GRKLWRRKRGDGAVGSSLRDQNHRQTVK) are Cytoplasmic-facing. A helical membrane pass occupies residues 264–285 (MLAVVVFAFILCWLPFHVGRYL). Residues 286-302 (FSKSFEPGSLEIAQISQ) lie on the Extracellular side of the membrane. A helical transmembrane segment spans residues 303–326 (YCNLVSFVLFYLSAAINPILYNIM). Over 327 to 366 (SKKYRVAVFKLLGFEPFSQRKLSTLKDESSRAWTKSSINT) the chain is Cytoplasmic.

The protein belongs to the G-protein coupled receptor 1 family.

The protein localises to the cell membrane. In terms of biological role, receptor for ghrelin, coupled to G-alpha-11 proteins. Stimulates growth hormone secretion. Also binds other growth hormone releasing peptides (GHRP) (e.g. Met-enkephalin and GHRP-6) as well as non-peptide, low molecular weight secretagogues (e.g. L-692,429, MK-0677, adenosine). The chain is Growth hormone secretagogue receptor type 1 (GHSR) from Oryctolagus cuniculus (Rabbit).